A 252-amino-acid chain; its full sequence is Triosephosphate isomerase (252 aa).

Residue 10–12 (NWK) coordinates substrate. Residue histidine 96 is the Electrophile of the active site. Residue glutamate 168 is the Proton acceptor of the active site. Substrate-binding positions include glycine 174, serine 214, and 235–236 (GG).

The protein belongs to the triosephosphate isomerase family. In terms of assembly, homodimer.

Its subcellular location is the cytoplasm. It carries out the reaction D-glyceraldehyde 3-phosphate = dihydroxyacetone phosphate. Its pathway is carbohydrate biosynthesis; gluconeogenesis. It participates in carbohydrate degradation; glycolysis; D-glyceraldehyde 3-phosphate from glycerone phosphate: step 1/1. In terms of biological role, involved in the gluconeogenesis. Catalyzes stereospecifically the conversion of dihydroxyacetone phosphate (DHAP) to D-glyceraldehyde-3-phosphate (G3P). The sequence is that of Triosephosphate isomerase from Streptococcus thermophilus (strain CNRZ 1066).